A 509-amino-acid polypeptide reads, in one-letter code: MQDTAKYLVHADITADGVVERSDVVGAVFGQTEGLLGDELDLRELQDASKVGRIDVEIDSENGQSFGRITIATSLDRVETAILGGALETIDRVGPCRSAIEVRKIEDVRSAKRREVVERAKSLLDGAFDESMRSSRDLVEEVRESVRVEDITDYEGLPAGPAVADSDAIVVVEGRADVLTLLQYGIKNAVAVEGTNVPEAVASLTETRTVTAFLDNDRGGELIRKELGQVGDIDYVATPPDGKCVEDLARHEVMSALREKVPYGRFKQAASDDADPEAAEQRTGEAAGATAADSEPAATDGIGGVTTDAEGKPVSSPESPAESPAADETAAVSAGTTPADAEEAAVDGATKTSTAGEEPNTPDDELTATSEAAEPGSAETKGESTAAEAPESSADGPAAAGASTDEQPKTLRGHVSDVIEAETGTFRLLDAEFAPLAAGDAGDVFEAVADAETVPAAVVVDGEASQRLLDIAAQRGIDHVVAASTGEFVKRPTSVRVRTATQLLNPEKA.

The 87-residue stretch at 167–253 (DAIVVVEGRA…CVEDLARHEV (87 aa)) folds into the Toprim domain. Mg(2+)-binding residues include E173, D215, and D217. Residues 267-411 (KQAASDDADP…ASTDEQPKTL (145 aa)) are disordered. Composition is skewed to low complexity over residues 313–331 (PVSS…ETAA) and 383–402 (ESTA…AAGA).

This sequence belongs to the archaeal DnaG primase family. In terms of assembly, forms a ternary complex with MCM helicase and DNA. It depends on Mg(2+) as a cofactor.

The catalysed reaction is ssDNA + n NTP = ssDNA/pppN(pN)n-1 hybrid + (n-1) diphosphate.. Its function is as follows. RNA polymerase that catalyzes the synthesis of short RNA molecules used as primers for DNA polymerase during DNA replication. This chain is DNA primase DnaG, found in Natronomonas pharaonis (strain ATCC 35678 / DSM 2160 / CIP 103997 / JCM 8858 / NBRC 14720 / NCIMB 2260 / Gabara) (Halobacterium pharaonis).